Reading from the N-terminus, the 509-residue chain is ATP synthase subunit alpha (509 aa).

Position 169 to 176 (169 to 176) interacts with ATP; that stretch reads GDRQTGKT.

The protein belongs to the ATPase alpha/beta chains family. F-type ATPases have 2 components, CF(1) - the catalytic core - and CF(0) - the membrane proton channel. CF(1) has five subunits: alpha(3), beta(3), gamma(1), delta(1), epsilon(1). CF(0) has three main subunits: a(1), b(2) and c(9-12). The alpha and beta chains form an alternating ring which encloses part of the gamma chain. CF(1) is attached to CF(0) by a central stalk formed by the gamma and epsilon chains, while a peripheral stalk is formed by the delta and b chains.

The protein localises to the cell inner membrane. It carries out the reaction ATP + H2O + 4 H(+)(in) = ADP + phosphate + 5 H(+)(out). Produces ATP from ADP in the presence of a proton gradient across the membrane. The alpha chain is a regulatory subunit. The polypeptide is ATP synthase subunit alpha (Brucella canis (strain ATCC 23365 / NCTC 10854 / RM-666)).